Here is a 279-residue protein sequence, read N- to C-terminus: Biotin synthase (279 aa).

In terms of domain architecture, Radical SAM core spans 1–227 (MKVYLCAISN…NAMIMVAGGR (227 aa)). Positions 16, 20, and 23 each coordinate [4Fe-4S] cluster. [2Fe-2S] cluster contacts are provided by C60, C95, and C153.

Belongs to the radical SAM superfamily. Biotin synthase family. Homodimer. [4Fe-4S] cluster serves as cofactor. The cofactor is [2Fe-2S] cluster.

It carries out the reaction (4R,5S)-dethiobiotin + (sulfur carrier)-SH + 2 reduced [2Fe-2S]-[ferredoxin] + 2 S-adenosyl-L-methionine = (sulfur carrier)-H + biotin + 2 5'-deoxyadenosine + 2 L-methionine + 2 oxidized [2Fe-2S]-[ferredoxin]. Its pathway is cofactor biosynthesis; biotin biosynthesis; biotin from 7,8-diaminononanoate: step 2/2. Its function is as follows. Catalyzes the conversion of dethiobiotin (DTB) to biotin by the insertion of a sulfur atom into dethiobiotin via a radical-based mechanism. In Nitratiruptor sp. (strain SB155-2), this protein is Biotin synthase.